Here is a 404-residue protein sequence, read N- to C-terminus: Cysteine--tRNA ligase (404 aa).

Cys14 is a binding site for Zn(2+). The 'HIGH' region signature appears at 16–26 (PTVYSDVHIGN). Zn(2+) contacts are provided by Cys190, His216, and Glu220. Residues 248 to 252 (KMAKS) carry the 'KMSKS' region motif. Lys251 contacts ATP.

Belongs to the class-I aminoacyl-tRNA synthetase family. Monomer. It depends on Zn(2+) as a cofactor.

The protein localises to the cytoplasm. The enzyme catalyses tRNA(Cys) + L-cysteine + ATP = L-cysteinyl-tRNA(Cys) + AMP + diphosphate. This is Cysteine--tRNA ligase from Mesomycoplasma hyopneumoniae (strain 232) (Mycoplasma hyopneumoniae).